The following is a 28-amino-acid chain: uncharacterized protein (28 aa).

This is an uncharacterized protein from Archaeoglobus fulgidus (strain ATCC 49558 / DSM 4304 / JCM 9628 / NBRC 100126 / VC-16).